A 260-amino-acid chain; its full sequence is Ubiquinone/menaquinone biosynthesis C-methyltransferase UbiE (260 aa).

Residues threonine 83, aspartate 104, and 132–133 each bind S-adenosyl-L-methionine; that span reads NA.

The protein belongs to the class I-like SAM-binding methyltransferase superfamily. MenG/UbiE family.

The enzyme catalyses a 2-demethylmenaquinol + S-adenosyl-L-methionine = a menaquinol + S-adenosyl-L-homocysteine + H(+). It catalyses the reaction a 2-methoxy-6-(all-trans-polyprenyl)benzene-1,4-diol + S-adenosyl-L-methionine = a 5-methoxy-2-methyl-3-(all-trans-polyprenyl)benzene-1,4-diol + S-adenosyl-L-homocysteine + H(+). The protein operates within quinol/quinone metabolism; menaquinone biosynthesis; menaquinol from 1,4-dihydroxy-2-naphthoate: step 2/2. Its pathway is cofactor biosynthesis; ubiquinone biosynthesis. Its function is as follows. Methyltransferase required for the conversion of demethylmenaquinol (DMKH2) to menaquinol (MKH2) and the conversion of 2-polyprenyl-6-methoxy-1,4-benzoquinol (DDMQH2) to 2-polyprenyl-3-methyl-6-methoxy-1,4-benzoquinol (DMQH2). In Bartonella quintana (strain Toulouse) (Rochalimaea quintana), this protein is Ubiquinone/menaquinone biosynthesis C-methyltransferase UbiE.